A 171-amino-acid chain; its full sequence is 3-hydroxydecanoyl-[acyl-carrier-protein] dehydratase (171 aa).

Histidine 70 is an active-site residue.

It belongs to the thioester dehydratase family. FabA subfamily. Homodimer.

It localises to the cytoplasm. It carries out the reaction a (3R)-hydroxyacyl-[ACP] = a (2E)-enoyl-[ACP] + H2O. The enzyme catalyses (3R)-hydroxydecanoyl-[ACP] = (2E)-decenoyl-[ACP] + H2O. The catalysed reaction is (2E)-decenoyl-[ACP] = (3Z)-decenoyl-[ACP]. The protein operates within lipid metabolism; fatty acid biosynthesis. Functionally, necessary for the introduction of cis unsaturation into fatty acids. Catalyzes the dehydration of (3R)-3-hydroxydecanoyl-ACP to E-(2)-decenoyl-ACP and then its isomerization to Z-(3)-decenoyl-ACP. Can catalyze the dehydratase reaction for beta-hydroxyacyl-ACPs with saturated chain lengths up to 16:0, being most active on intermediate chain length. This is 3-hydroxydecanoyl-[acyl-carrier-protein] dehydratase from Stutzerimonas stutzeri (strain A1501) (Pseudomonas stutzeri).